Here is a 1033-residue protein sequence, read N- to C-terminus: Tyrosine-protein kinase-like otk (1033 aa).

The N-terminal stretch at 1–22 is a signal peptide; sequence MTARMISIYGLVLASMMASVLA. Topologically, residues 23 to 581 are extracellular; the sequence is SSSRFQRLPQ…GGDGFLVTRA (559 aa). Ig-like C2-type domains follow at residues 25–114, 113–199, 251–365, 368–463, and 468–558; these read SRFQ…AKLS, LSVI…RVMS, PEDL…VPVS, PGVL…VAIN, and PKFS…VQLI. N-linked (GlcNAc...) asparagine glycosylation is present at N39. 4 disulfide bridges follow: C46–C95, C137–C188, C276–C354, and C399–C447. N-linked (GlcNAc...) asparagine glycosylation is found at N336, N417, N429, N444, N457, N512, and N524. C490 and C542 are oxidised to a cystine. Residues 582-602 form a helical membrane-spanning segment; that stretch reads VLITMTVALAYIVLVVGLMLW. The Cytoplasmic segment spans residues 603-1033; that stretch reads CRYRRQARKA…LSKAMQSAEK (431 aa). 2 disordered regions span residues 617 to 679 and 718 to 760; these read LSTK…KKSA and SPSD…KTSM. Over residues 655–673 the composition is skewed to polar residues; that stretch reads KSSGDAQKSDDTACSQQSR. S678 is modified (phosphoserine). The Protein kinase; inactive domain occupies 692–1028; it reads LSELIQIGRG…QLGAALSKAM (337 aa). Basic and acidic residues predominate over residues 720-731; the sequence is SDKDADTEKQHS.

It belongs to the protein kinase superfamily. Tyr protein kinase family. Insulin receptor subfamily. As to quaternary structure, interacts with plexA; component of a receptor complex that mediates the repulsive signaling in response to Semaphorin ligands.

It is found in the cell membrane. Acts as a calcium-dependent, homophilic cell adhesion molecule that regulates neural recognition during the development of the nervous system. Component of the repulsive Plexin signaling response to regulate motor axon guidance at the embryonic stage. Also component of a receptor complex that is required in the adult visual system to innervate the lamina layer; specific targeting of R1-R6 axons. The polypeptide is Tyrosine-protein kinase-like otk (Drosophila yakuba (Fruit fly)).